Reading from the N-terminus, the 79-residue chain is Putative Fis-like DNA-binding protein (79 aa).

Positions 55-74 (QSKASVMLGLNRNTLRKKLI) form a DNA-binding region, H-T-H motif.

The protein belongs to the transcriptional regulatory Fis family.

This Neisseria meningitidis serogroup A / serotype 4A (strain DSM 15465 / Z2491) protein is Putative Fis-like DNA-binding protein.